The chain runs to 100 residues: Small ribosomal subunit protein uS14c (100 aa).

This sequence belongs to the universal ribosomal protein uS14 family. In terms of assembly, part of the 30S ribosomal subunit.

The protein localises to the plastid. The protein resides in the chloroplast. In terms of biological role, binds 16S rRNA, required for the assembly of 30S particles. This is Small ribosomal subunit protein uS14c from Pleurastrum terricola (Filamentous green alga).